Here is a 136-residue protein sequence, read N- to C-terminus: uncharacterized protein (136 aa).

The protein localises to the mitochondrion. This is an uncharacterized protein from Arabidopsis thaliana (Mouse-ear cress).